Reading from the N-terminus, the 143-residue chain is Zinc-containing ferredoxin (143 aa).

Residues 13 to 60 form an N-terminal extension region; it reads PIDEHFLENDKDYPVTGQHNGHDVRAEGMQRLDADGKPYPTKLGIHGT. 3 residues coordinate Zn(2+): H31, H34, and H58. 2 4Fe-4S ferredoxin-type domains span residues 60–89 and 115–143; these read THVA…WNLN and KCDP…KITP. The [3Fe-4S] cluster site is built by C69 and C75. C79 serves as a coordination point for [4Fe-4S] cluster. D117 serves as a coordination point for Zn(2+). [4Fe-4S] cluster contacts are provided by C124, C127, and C130. C134 serves as a coordination point for [3Fe-4S] cluster.

[3Fe-4S] cluster is required as a cofactor. Requires [4Fe-4S] cluster as cofactor. It depends on Zn(2+) as a cofactor.

In terms of biological role, ferredoxins are iron-sulfur proteins that transfer electrons in a wide variety of metabolic reactions. The polypeptide is Zinc-containing ferredoxin (zfx) (Thermoplasma acidophilum (strain ATCC 25905 / DSM 1728 / JCM 9062 / NBRC 15155 / AMRC-C165)).